A 515-amino-acid polypeptide reads, in one-letter code: 2,3-bisphosphoglycerate-independent phosphoglycerate mutase (515 aa).

D17 and S67 together coordinate Mn(2+). S67 acts as the Phosphoserine intermediate in catalysis. Residues H128, 157 to 158 (RD), R190, R196, 262 to 265 (RADR), and K336 contribute to the substrate site. Mn(2+)-binding residues include D403, H407, D444, H445, and H463.

It belongs to the BPG-independent phosphoglycerate mutase family. As to quaternary structure, monomer. Requires Mn(2+) as cofactor.

The catalysed reaction is (2R)-2-phosphoglycerate = (2R)-3-phosphoglycerate. Its pathway is carbohydrate degradation; glycolysis; pyruvate from D-glyceraldehyde 3-phosphate: step 3/5. Its function is as follows. Catalyzes the interconversion of 2-phosphoglycerate and 3-phosphoglycerate. This Acinetobacter baylyi (strain ATCC 33305 / BD413 / ADP1) protein is 2,3-bisphosphoglycerate-independent phosphoglycerate mutase.